The chain runs to 766 residues: Phosphoribosylformylglycinamidine synthase subunit PurL (766 aa).

Residue histidine 49 is part of the active site. Positions 52 and 91 each coordinate ATP. Glutamate 93 contributes to the Mg(2+) binding site. Residues 94-97 (SHNH) and arginine 116 contribute to the substrate site. Catalysis depends on histidine 95, which acts as the Proton acceptor. Residue aspartate 117 coordinates Mg(2+). Glutamine 240 provides a ligand contact to substrate. Position 268 (aspartate 268) interacts with Mg(2+). A substrate-binding site is contributed by 312–314 (ESQ). The ATP site is built by aspartate 508 and glycine 545. Asparagine 546 contacts Mg(2+). Serine 548 lines the substrate pocket.

This sequence belongs to the FGAMS family. Monomer. Part of the FGAM synthase complex composed of 1 PurL, 1 PurQ and 2 PurS subunits.

Its subcellular location is the cytoplasm. It carries out the reaction N(2)-formyl-N(1)-(5-phospho-beta-D-ribosyl)glycinamide + L-glutamine + ATP + H2O = 2-formamido-N(1)-(5-O-phospho-beta-D-ribosyl)acetamidine + L-glutamate + ADP + phosphate + H(+). Its pathway is purine metabolism; IMP biosynthesis via de novo pathway; 5-amino-1-(5-phospho-D-ribosyl)imidazole from N(2)-formyl-N(1)-(5-phospho-D-ribosyl)glycinamide: step 1/2. In terms of biological role, part of the phosphoribosylformylglycinamidine synthase complex involved in the purines biosynthetic pathway. Catalyzes the ATP-dependent conversion of formylglycinamide ribonucleotide (FGAR) and glutamine to yield formylglycinamidine ribonucleotide (FGAM) and glutamate. The FGAM synthase complex is composed of three subunits. PurQ produces an ammonia molecule by converting glutamine to glutamate. PurL transfers the ammonia molecule to FGAR to form FGAM in an ATP-dependent manner. PurS interacts with PurQ and PurL and is thought to assist in the transfer of the ammonia molecule from PurQ to PurL. This Synechococcus sp. (strain CC9902) protein is Phosphoribosylformylglycinamidine synthase subunit PurL.